A 348-amino-acid polypeptide reads, in one-letter code: Chloroacetanilide N-alkylformylase, oxygenase component (348 aa).

A Rieske domain is found at 7 to 108; the sequence is WYAVAWCDEV…ARERHKLIWA (102 aa). The [2Fe-2S] cluster site is built by C47, H49, C66, and H69. Fe cation contacts are provided by H159 and H164. H250 contacts substrate. D293 contacts Fe cation.

In terms of assembly, the chloroacetanilide N-alkylformylase multicomponent enzyme system is composed of an oxygenase component (CndA) and an electron transfer component formed by a ferredoxin reductase (CndC1) and a ferredoxin (CndB1). In vitro, chloroacetanilide N-alkylformylase assays in which CndB1 is substituted for CndB2 demonstrate that the two enzymes possess nearly identical activities. [2Fe-2S] cluster serves as cofactor.

The enzyme catalyses butachlor + 2 reduced [2Fe-2S]-[ferredoxin] + O2 + 2 H(+) = butyl formate + N-(2,6-diethylphenyl)-2-chloroacetamide + 2 oxidized [2Fe-2S]-[ferredoxin] + H2O. It carries out the reaction alachlor + 2 reduced [2Fe-2S]-[ferredoxin] + O2 + 2 H(+) = methyl formate + N-(2,6-diethylphenyl)-2-chloroacetamide + 2 oxidized [2Fe-2S]-[ferredoxin] + H2O. The catalysed reaction is acetochlor + 2 reduced [2Fe-2S]-[ferredoxin] + O2 + 2 H(+) = N-(2-ethyl-6-methylphenyl)-2-chloroacetamide + ethyl formate + 2 oxidized [2Fe-2S]-[ferredoxin] + H2O. Its activity is regulated as follows. Activity enhanced by Fe(2+) and Mg(2+) ions. Divalent cations such as Ca(2+), Cr(2+), Co(2+), and Mn(2+) show moderate inhibition of the enzyme, whereas heavy metal ions such as Ag(+), Cu(2+), Pb(2+), Hg(2+), Ni(2+) and Zn(2+) severely inhibit the activity. Functionally, component of the chloroacetanilide N-alkylformylase multicomponent enzyme system involved in the degradation of chloroacetanilide herbicides (N-alkoxyalkyl-N-chloroacetyl-substituted aniline derivatives). In vitro, catalyzes the N-dealkylation of butachlor, alachlor and acetochlor to yield 2-chloro-N-(2,6-diethylphenyl)acetamide (CDEPA) (for alachlor and butachlor) and 2-chloro-N-(2-methyl-6-ethylphenyl)acetamide (CMEPA) (for acetochlor). The polypeptide is Chloroacetanilide N-alkylformylase, oxygenase component (Rhizorhabdus wittichii (strain DC-6 / KACC 16600) (Sphingomonas wittichii)).